The following is a 460-amino-acid chain: Cysteine--tRNA ligase (460 aa).

Residue Cys29 coordinates Zn(2+). Residues 31 to 41 (PTVYDFAHIGN) carry the 'HIGH' region motif. Zn(2+) contacts are provided by Cys227, His252, and Glu256. The 'KMSKS' region signature appears at 285 to 289 (KMSKS). Residue Lys288 participates in ATP binding.

This sequence belongs to the class-I aminoacyl-tRNA synthetase family. In terms of assembly, monomer. It depends on Zn(2+) as a cofactor.

The protein resides in the cytoplasm. The enzyme catalyses tRNA(Cys) + L-cysteine + ATP = L-cysteinyl-tRNA(Cys) + AMP + diphosphate. The polypeptide is Cysteine--tRNA ligase (Bradyrhizobium diazoefficiens (strain JCM 10833 / BCRC 13528 / IAM 13628 / NBRC 14792 / USDA 110)).